Here is a 356-residue protein sequence, read N- to C-terminus: Dihydroorotate dehydrogenase (quinone) (356 aa).

FMN-binding positions include 66–70 (AGFDK) and threonine 90. Lysine 70 serves as a coordination point for substrate. Substrate is bound at residue 115–119 (NRMGF). The FMN site is built by asparagine 143 and asparagine 176. Asparagine 176 is a substrate binding site. Residue serine 179 is the Nucleophile of the active site. A substrate-binding site is contributed by asparagine 181. Residues lysine 212 and threonine 240 each contribute to the FMN site. 241 to 242 (NT) is a binding site for substrate. Residues glycine 264, glycine 293, and 314–315 (YT) each bind FMN.

The protein belongs to the dihydroorotate dehydrogenase family. Type 2 subfamily. As to quaternary structure, monomer. Requires FMN as cofactor.

It is found in the cell membrane. The catalysed reaction is (S)-dihydroorotate + a quinone = orotate + a quinol. It participates in pyrimidine metabolism; UMP biosynthesis via de novo pathway; orotate from (S)-dihydroorotate (quinone route): step 1/1. Functionally, catalyzes the conversion of dihydroorotate to orotate with quinone as electron acceptor. This chain is Dihydroorotate dehydrogenase (quinone) (pyrD), found in Mycobacterium leprae (strain TN).